Consider the following 464-residue polypeptide: tRNA(Ile)-lysidine synthase (464 aa).

Residue 26-31 (SGGPDS) participates in ATP binding.

Belongs to the tRNA(Ile)-lysidine synthase family.

The protein localises to the cytoplasm. The enzyme catalyses cytidine(34) in tRNA(Ile2) + L-lysine + ATP = lysidine(34) in tRNA(Ile2) + AMP + diphosphate + H(+). In terms of biological role, ligates lysine onto the cytidine present at position 34 of the AUA codon-specific tRNA(Ile) that contains the anticodon CAU, in an ATP-dependent manner. Cytidine is converted to lysidine, thus changing the amino acid specificity of the tRNA from methionine to isoleucine. The protein is tRNA(Ile)-lysidine synthase of Geobacillus kaustophilus (strain HTA426).